We begin with the raw amino-acid sequence, 621 residues long: MLLLPSAAEGQGTAITHALTSASAVCQVEPVGRWFEAFVKRRNRNASTSFQELEDKKELSEESEDEELQLEEFPMLKTLDPKDWKNQDHYAVLGLGHVRYKATQRQIKAAHKTMVLKHHPDKRKAAGEPIKEGDNDYFTCITKAYEMLSDPVKRRAFNSVDPTFDNSVPSKSEAKENFFQVFSPVFERNSRWSNKKNVPKLGDMNSSFEDVDAFYSFWYNFDSWREFSYLDEEEKEKAECRDERKWIEKQNRATRAQRKKEEMNRIRTLVDNAYSCDPRIKKFKEEGKAKKEAEKRAKAEARRKEQEAKEKQRQAELEAVRLAKEKEEEEVRQQALLAKKEKEIQKKAIKKERQKLRNSCKNWNHFSDNEADRVKMMEEVEKLCDRLELASLQCLNEILASSTREVGKAALEKQIEEVNELMRKEKEEADARMRQASKNAEKSTGGSGSGSKNWSEDDLQLLIKAVNLFPAGTNSRWEVIANYMNIHSSSGVKRTAKDVIGKAKSLQKLDPHQKDDINKKAFDKFKKEHGVAPQADSAAPSERFEGPCIDSIPWTTEEQKLLEQALKTYPVNTPERWEKIAEAVPGRTKKDCMRRYKELVEMVKAKKAAQEQVLNASRARK.

N-acetylmethionine is present on M1. Phosphoserine occurs at positions 47, 49, 60, and 63. The J domain occupies D88–D161. The tract at residues V160–Q250 is ZRF1-UBD. The residue at position 183 (S183) is a Phosphoserine. Disordered regions lie at residues G287 to Q312 and K426 to N453. 2 SANT domains span residues S449–P511 and I549–K604.

As to quaternary structure, component of ribosome-associated complex (RAC), a heterodimer composed of Hsp70/DnaK-type chaperone HSPA14 and Hsp40/DnaJ-type chaperone DNAJC2. Interacts (via ZRF1-UBD region) with ID1. Phosphorylated in M (mitotic) phase.

It is found in the nucleus. It localises to the cytoplasm. The protein localises to the cytosol. Functionally, acts both as a chaperone in the cytosol and as a chromatin regulator in the nucleus. When cytosolic, acts as a molecular chaperone: component of the ribosome-associated complex (RAC), a complex involved in folding or maintaining nascent polypeptides in a folding-competent state. In the RAC complex, stimulates the ATPase activity of the ribosome-associated pool of Hsp70-type chaperones HSPA14 that bind to the nascent polypeptide chain. When nuclear, mediates the switching from polycomb-repressed genes to an active state: specifically recruited at histone H2A ubiquitinated at 'Lys-119' (H2AK119ub), and promotes the displacement of the polycomb PRC1 complex from chromatin, thereby facilitating transcription activation. The polypeptide is DnaJ homolog subfamily C member 2 (Dnajc2) (Rattus norvegicus (Rat)).